An 894-amino-acid polypeptide reads, in one-letter code: Protein SEY1 homolog (894 aa).

Low complexity-rich tracts occupy residues 1-10 and 36-48; these read MSEEITTNQT and VQEQQEQQQQEQQ. The segment at 1 to 97 is disordered; sequence MSEEITTNQT…QKQQTQEQEH (97 aa). At 1-800 the chain is on the cytoplasmic side; the sequence is MSEEITTNQT…EQNRLTSGGG (800 aa). The stretch at 21–60 forms a coiled coil; sequence RLSNENIKQEDEEQQVQEQQEQQQQEQQEQIDDQDTQQQE. Positions 49 to 65 are enriched in acidic residues; sequence EQIDDQDTQQQEDEFVV. Over residues 78-93 the composition is skewed to low complexity; that stretch reads TPTLQETPQQQKQQTQ. The 224-residue stretch at 138 to 361 folds into the GB1/RHD3-type G domain; that stretch reads GFDYSVISIL…ADSFIPKRKY (224 aa). Residue 148–155 coordinates GTP; the sequence is GPQSSGKS. The chain crosses the membrane as a helical span at residues 801–821; sequence VPGYMIILLCVLGFNEFISII. The Lumenal segment spans residues 822–824; it reads SSP. Residues 825–845 traverse the membrane as a helical segment; the sequence is LLLLLTILLGGVGFVLFKLGL. Over 846–894 the chain is Cytoplasmic; it reads AGPFIDYSSQILVHFISKVKDIVLHVEQLQEQNHNNNNNNNNTPKQKRE.

Belongs to the TRAFAC class dynamin-like GTPase superfamily. GB1/RHD3 GTPase family. RHD3 subfamily.

The protein resides in the endoplasmic reticulum membrane. In terms of biological role, probable GTP-binding protein that may be involved in cell development. This is Protein SEY1 homolog from Dictyostelium discoideum (Social amoeba).